We begin with the raw amino-acid sequence, 575 residues long: Acetylcholine receptor subunit beta-type acr-2 (575 aa).

Positions 1–20 are cleaved as a signal peptide; it reads MKKTVKILLILITVFLKVHC. Topologically, residues 21-270 are extracellular; sequence NGGHDDEAAD…IRRKTLFYTV (250 aa). The disordered stretch occupies residues 31–57; that stretch reads FLSHTNIDDPNNSSDPNKNSDQGDTMG. Low complexity predominate over residues 38–50; it reads DDPNNSSDPNKNS. N-linked (GlcNAc...) asparagine glycosylation is found at N41, N42, N80, and N131. A disulfide bridge connects residues C185 and C199. A run of 3 helical transmembrane segments spans residues 271-291, 299-319, and 331-351; these read ILII…YLPV, LTIS…KILP, and LLLA…IVNI. The Cytoplasmic portion of the chain corresponds to 352–527; that stretch reads YFRSALSHKM…WKYVAMVLDR (176 aa). Residues 528–548 traverse the membrane as a helical segment; it reads LILLIFFGVTLGGTLGIICSA.

Belongs to the ligand-gated ion channel (TC 1.A.9) family. Acetylcholine receptor (TC 1.A.9.1) subfamily. As to quaternary structure, component of nicotinic acetylcholine receptor. In cholinergic motoneurons, composed of 2 non-alpha subunits acr-2 and acr-3, and 3 alpha subunits unc-38, unc-63 and acr-12. Specifically expressed in cholinergic ventral cord motoneurons of the VA, VB, DA and DB classes but not AS and VC classes. Expressed in PVQ and DVC neurons in the tail.

The protein resides in the postsynaptic cell membrane. It localises to the cell membrane. Its function is as follows. Non-alpha subunit of nicotinic acetylcholine receptor (nAChR). Acts in cholinergic motoneurons to regulate presynaptic neurotransmitter release, thereby ensuring normal level of excitation of cholinergic motoneurons during locomotion. This is Acetylcholine receptor subunit beta-type acr-2 (acr-2) from Caenorhabditis elegans.